Here is a 121-residue protein sequence, read N- to C-terminus: Small ribosomal subunit protein uS13 (121 aa).

The segment at 91–121 is disordered; sequence HRMSLPVRGQRTRTNARTRRGSRKTVAGRKK. The segment covering 100–121 has biased composition (basic residues); the sequence is QRTRTNARTRRGSRKTVAGRKK.

The protein belongs to the universal ribosomal protein uS13 family. Part of the 30S ribosomal subunit. Forms a loose heterodimer with protein S19. Forms two bridges to the 50S subunit in the 70S ribosome.

Its function is as follows. Located at the top of the head of the 30S subunit, it contacts several helices of the 16S rRNA. In the 70S ribosome it contacts the 23S rRNA (bridge B1a) and protein L5 of the 50S subunit (bridge B1b), connecting the 2 subunits; these bridges are implicated in subunit movement. Contacts the tRNAs in the A and P-sites. This Prochlorococcus marinus (strain SARG / CCMP1375 / SS120) protein is Small ribosomal subunit protein uS13.